A 318-amino-acid chain; its full sequence is DNA-directed RNA polymerase subunit alpha (318 aa).

The tract at residues 1 to 227 (MTQFEIECLD…NLFSPLKTID (227 aa)) is alpha N-terminal domain (alpha-NTD). The segment at 241–318 (HINQILIEEL…KEKTTKIYNK (78 aa)) is alpha C-terminal domain (alpha-CTD).

It belongs to the RNA polymerase alpha chain family. In plastids the minimal PEP RNA polymerase catalytic core is composed of four subunits: alpha, beta, beta', and beta''. When a (nuclear-encoded) sigma factor is associated with the core the holoenzyme is formed, which can initiate transcription.

Its subcellular location is the plastid. It is found in the chloroplast. The catalysed reaction is RNA(n) + a ribonucleoside 5'-triphosphate = RNA(n+1) + diphosphate. DNA-dependent RNA polymerase catalyzes the transcription of DNA into RNA using the four ribonucleoside triphosphates as substrates. In Guillardia theta (Cryptophyte), this protein is DNA-directed RNA polymerase subunit alpha.